The sequence spans 272 residues: Orotidine 5'-phosphate decarboxylase (272 aa).

The active-site Proton donor is Lys95.

It belongs to the OMP decarboxylase family. Type 2 subfamily.

The enzyme catalyses orotidine 5'-phosphate + H(+) = UMP + CO2. It functions in the pathway pyrimidine metabolism; UMP biosynthesis via de novo pathway; UMP from orotate: step 2/2. This Cupriavidus taiwanensis (strain DSM 17343 / BCRC 17206 / CCUG 44338 / CIP 107171 / LMG 19424 / R1) (Ralstonia taiwanensis (strain LMG 19424)) protein is Orotidine 5'-phosphate decarboxylase.